A 570-amino-acid chain; its full sequence is Sulfite reductase [NADPH] hemoprotein beta-component (570 aa).

C434, C440, C479, and C483 together coordinate [4Fe-4S] cluster. C483 provides a ligand contact to siroheme.

It belongs to the nitrite and sulfite reductase 4Fe-4S domain family. Alpha(8)-beta(8). The alpha component is a flavoprotein, the beta component is a hemoprotein. It depends on siroheme as a cofactor. The cofactor is [4Fe-4S] cluster.

The catalysed reaction is hydrogen sulfide + 3 NADP(+) + 3 H2O = sulfite + 3 NADPH + 4 H(+). It participates in sulfur metabolism; hydrogen sulfide biosynthesis; hydrogen sulfide from sulfite (NADPH route): step 1/1. Component of the sulfite reductase complex that catalyzes the 6-electron reduction of sulfite to sulfide. This is one of several activities required for the biosynthesis of L-cysteine from sulfate. The sequence is that of Sulfite reductase [NADPH] hemoprotein beta-component from Escherichia fergusonii (strain ATCC 35469 / DSM 13698 / CCUG 18766 / IAM 14443 / JCM 21226 / LMG 7866 / NBRC 102419 / NCTC 12128 / CDC 0568-73).